The following is a 143-amino-acid chain: Large ribosomal subunit protein uL15 (143 aa).

Positions 1–52 (MKLNTLAPAAGSKSAPKRLGRGIGSGLGKTSGKGHKGQKARSGGYHKVGFEG) are disordered. The span at 21-31 (RGIGSGLGKTS) shows a compositional bias: gly residues.

Belongs to the universal ribosomal protein uL15 family. In terms of assembly, part of the 50S ribosomal subunit.

Its function is as follows. Binds to the 23S rRNA. This chain is Large ribosomal subunit protein uL15, found in Francisella tularensis subsp. holarctica (strain FTNF002-00 / FTA).